A 120-amino-acid chain; its full sequence is Small ribosomal subunit protein uS13 (120 aa).

The segment at 96–120 (PCRGQRTRTNARTRKGPRKAIAGKK) is disordered.

The protein belongs to the universal ribosomal protein uS13 family. In terms of assembly, part of the 30S ribosomal subunit. Forms a loose heterodimer with protein S19. Forms two bridges to the 50S subunit in the 70S ribosome.

In terms of biological role, located at the top of the head of the 30S subunit, it contacts several helices of the 16S rRNA. In the 70S ribosome it contacts the 23S rRNA (bridge B1a) and protein L5 of the 50S subunit (bridge B1b), connecting the 2 subunits; these bridges are implicated in subunit movement. Contacts the tRNAs in the A and P-sites. The protein is Small ribosomal subunit protein uS13 of Chromobacterium violaceum (strain ATCC 12472 / DSM 30191 / JCM 1249 / CCUG 213 / NBRC 12614 / NCIMB 9131 / NCTC 9757 / MK).